The chain runs to 338 residues: MREQLEQLRCEAFQAIADASTGEALQNIRIKYLGRKGAMTALMKGLGALSAEERPVVGQMVNSIRDEIESGIEAGLFAARERARDEKLRSERIDVTLPGRRPGCGSKHPITLVIEEVCDIFAGLGFSVAEGPEIEHDWYNFEALNFPPEHPARDMQDTFFVDNNLLLRTHTSPVQIRTMLKRKPPLRIIAPGTVYRCDSDATHSPMFHQIEGLMVDQGVSFGDLKGILTIFTNQLFGQKTGVRLRPSFFPFTEPSAEVDIACVICGGKGCRVCKNSGWLEILGAGMVDPEVYRHVGYDAEAVSGFAFGMGIERIAMLKYGISDMRLLFENDVRFLRQF.

Glutamate 253 contributes to the Mg(2+) binding site.

Belongs to the class-II aminoacyl-tRNA synthetase family. Phe-tRNA synthetase alpha subunit type 1 subfamily. In terms of assembly, tetramer of two alpha and two beta subunits. It depends on Mg(2+) as a cofactor.

The protein localises to the cytoplasm. It carries out the reaction tRNA(Phe) + L-phenylalanine + ATP = L-phenylalanyl-tRNA(Phe) + AMP + diphosphate + H(+). The polypeptide is Phenylalanine--tRNA ligase alpha subunit (Pelobacter propionicus (strain DSM 2379 / NBRC 103807 / OttBd1)).